The chain runs to 984 residues: MMEEDLYDEFGNYIGPENEEDEEELFPQAPSPTIAQVPSFEEVIPDEELEDVERAEEMALSHLEPQNAVVLHEDKQYYPSAEEVYGSNVDIMVQEQDTQPLSQPIIEPIRHKRIAIETTNVPDTVYKKEFLFGLLTGTDDVRSFIVAGHLHHGKSALLDLLVYYTHPDTKPPKRRSLRYTDTHYLERERVMSIKSTPLTLAVSDMKGKTFAFQCIDTPGHVDFVDEVAAPMAISDGVVLVVDVIEGVMINTTRIIKHAILHDMPIVLVLNKVDRLILELRLPPNDAYHKLRHVIDEVNDNICQISKDLKYRVSPELGNVCFASCDLGYCFTLSSFAKLYIDRHGGIDVDLFSKRLWGDIYFDSKTRKFAKQSLDGSGVRSFVHFILEPLYKLHTLTISDEAEKLKKHLSSFQIYLKPKDYLLDPKPLLQLICASFFGFPVGFVNAVTRHIPSPRENAARKASQSYIGPINSSIGKAILEMSREESAPLVMHVTKLYNTVDANNFYAFARVYSGQVKKGQKVKVLGENYSLEDEEDMVVAHIAEICVPCARYRLHVDGAVAGMLVLLGGVDNSISKTATIVSDNLKDDPYIFRPIAHMSESVFKVAVEPHNPSELPKLLDGLRKTNKSYPLSITKVEESGEHTIFGTGEMYMDCLLYDLRTLYSEIEIRVSDPVARFCETAVDTSSIKCFSDTPNKKNRITMVVEPLEKGISNDIENGKVNINWPQKRISEFFQKNYDWDLLASRSIWAFGPDDRGTNILRDDTLSTDVDKNVLNSVKEYIKQGFQWGTREGPLCDETIRNVNFRLMDVVLAPEQIYRGGGQIIPTARRVCYSSFLTASPRLMEPVYMVEVHAPADSLPIIYDLLTRRRGHVLQDIPRPGSPLYLVRALIPVIDSCGFETDLRVHTQGQAMCQMVFDHWQVVPGDPLDKSIKPKPLEPARGSDLARDFLIKTRRRKGLVEDVSTTRYFDQEMIDSLKEAGVVLSL.

Positions 1–28 are disordered; the sequence is MMEEDLYDEFGNYIGPENEEDEEELFPQ. One can recognise a tr-type G domain in the interval 139–402; sequence DDVRSFIVAG…HTLTISDEAE (264 aa). The G1 stretch occupies residues 148–155; that stretch reads GHLHHGKS. 148-155 contributes to the GTP binding site; sequence GHLHHGKS. Residues 190–194 form a G2 region; the sequence is VMSIK. The interval 216 to 219 is G3; that stretch reads DTPG. GTP-binding positions include 216-220 and 270-273; these read DTPGH and NKVD. The tract at residues 270–273 is G4; sequence NKVD. A G5 region spans residues 371–373; that stretch reads QSL.

Belongs to the TRAFAC class translation factor GTPase superfamily. Classic translation factor GTPase family. EF-G/EF-2 subfamily. In terms of assembly, belongs to the 40S cdc5-associated complex (or cwf complex), a spliceosome sub-complex reminiscent of a late-stage spliceosome composed of the U2, U5 and U6 snRNAs and at least brr2, cdc5, cwf2/prp3, cwf3/syf1, cwf4/syf3, cwf5/ecm2, spp42/cwf6, cwf7/spf27, cwf8, cwf9, cwf10, cwf11, cwf12, prp45/cwf13, cwf14, cwf15, cwf16, cwf17, cwf18, cwf19, cwf20, cwf21, cwf22, cwf23, cwf24, cwf25, cwf26, cyp7/cwf27, cwf28, cwf29/ist3, lea1, msl1, prp5/cwf1, prp10, prp12/sap130, prp17, prp22, sap61, sap62, sap114, sap145, slu7, smb1, smd1, smd3, smf1, smg1 and syf2.

The protein localises to the cytoplasm. It localises to the nucleus. In terms of biological role, component of the U5 snRNP complex required for pre-mRNA splicing. Binds GTP. In Schizosaccharomyces pombe (strain 972 / ATCC 24843) (Fission yeast), this protein is Pre-mRNA-splicing factor cwf10 (cwf10).